Reading from the N-terminus, the 908-residue chain is Alanine--tRNA ligase (908 aa).

Residues His596, His600, Cys698, and His702 each contribute to the Zn(2+) site.

Belongs to the class-II aminoacyl-tRNA synthetase family. Requires Zn(2+) as cofactor.

The protein localises to the cytoplasm. The enzyme catalyses tRNA(Ala) + L-alanine + ATP = L-alanyl-tRNA(Ala) + AMP + diphosphate. Its function is as follows. Catalyzes the attachment of alanine to tRNA(Ala) in a two-step reaction: alanine is first activated by ATP to form Ala-AMP and then transferred to the acceptor end of tRNA(Ala). Also edits incorrectly charged Ser-tRNA(Ala) and Gly-tRNA(Ala) via its editing domain. In Lysinibacillus sphaericus (strain C3-41), this protein is Alanine--tRNA ligase.